Here is a 112-residue protein sequence, read N- to C-terminus: ATP synthase epsilon chain (112 aa).

The protein belongs to the ATPase epsilon chain family. As to quaternary structure, F-type ATPases have 2 components, CF(1) - the catalytic core - and CF(0) - the membrane proton channel. CF(1) has five subunits: alpha(3), beta(3), gamma(1), delta(1), epsilon(1). CF(0) has three main subunits: a, b and c.

The protein resides in the cell inner membrane. In terms of biological role, produces ATP from ADP in the presence of a proton gradient across the membrane. The polypeptide is ATP synthase epsilon chain (Rickettsia felis (strain ATCC VR-1525 / URRWXCal2) (Rickettsia azadi)).